Consider the following 131-residue polypeptide: uncharacterized protein (131 aa).

This is an uncharacterized protein from Acanthamoeba polyphaga (Amoeba).